Here is a 103-residue protein sequence, read N- to C-terminus: Large ribosomal subunit protein bL21 (103 aa).

This sequence belongs to the bacterial ribosomal protein bL21 family. Part of the 50S ribosomal subunit. Contacts protein L20.

In terms of biological role, this protein binds to 23S rRNA in the presence of protein L20. The protein is Large ribosomal subunit protein bL21 of Cupriavidus metallidurans (strain ATCC 43123 / DSM 2839 / NBRC 102507 / CH34) (Ralstonia metallidurans).